Here is a 157-residue protein sequence, read N- to C-terminus: Crossover junction endodeoxyribonuclease RuvC (157 aa).

Active-site residues include Asp7, Glu67, and Asp139. 3 residues coordinate Mg(2+): Asp7, Glu67, and Asp139.

The protein belongs to the RuvC family. Homodimer which binds Holliday junction (HJ) DNA. The HJ becomes 2-fold symmetrical on binding to RuvC with unstacked arms; it has a different conformation from HJ DNA in complex with RuvA. In the full resolvosome a probable DNA-RuvA(4)-RuvB(12)-RuvC(2) complex forms which resolves the HJ. Mg(2+) is required as a cofactor.

It is found in the cytoplasm. The enzyme catalyses Endonucleolytic cleavage at a junction such as a reciprocal single-stranded crossover between two homologous DNA duplexes (Holliday junction).. Its function is as follows. The RuvA-RuvB-RuvC complex processes Holliday junction (HJ) DNA during genetic recombination and DNA repair. Endonuclease that resolves HJ intermediates. Cleaves cruciform DNA by making single-stranded nicks across the HJ at symmetrical positions within the homologous arms, yielding a 5'-phosphate and a 3'-hydroxyl group; requires a central core of homology in the junction. The consensus cleavage sequence is 5'-(A/T)TT(C/G)-3'. Cleavage occurs on the 3'-side of the TT dinucleotide at the point of strand exchange. HJ branch migration catalyzed by RuvA-RuvB allows RuvC to scan DNA until it finds its consensus sequence, where it cleaves and resolves the cruciform DNA. The sequence is that of Crossover junction endodeoxyribonuclease RuvC from Prochlorococcus marinus subsp. pastoris (strain CCMP1986 / NIES-2087 / MED4).